A 313-amino-acid chain; its full sequence is D-alanine--D-alanine ligase (313 aa).

An ATP-grasp domain is found at 108-308; it reads KLVWQQTGVP…YSELVVKVLS (201 aa). Residue 138–193 participates in ATP binding; it reads VAKLGLPLFVKPASEGSSVAVLKVKTADALPAALSEAATHDKIVIVEKSIEGGGEY. Residues Asp-262, Glu-275, and Asn-277 each coordinate Mg(2+).

This sequence belongs to the D-alanine--D-alanine ligase family. Requires Mg(2+) as cofactor. It depends on Mn(2+) as a cofactor.

The protein localises to the cytoplasm. It catalyses the reaction 2 D-alanine + ATP = D-alanyl-D-alanine + ADP + phosphate + H(+). It participates in cell wall biogenesis; peptidoglycan biosynthesis. In terms of biological role, cell wall formation. The protein is D-alanine--D-alanine ligase of Burkholderia vietnamiensis (strain G4 / LMG 22486) (Burkholderia cepacia (strain R1808)).